Consider the following 426-residue polypeptide: Glutamate-1-semialdehyde 2,1-aminomutase (426 aa).

Lys265 carries the N6-(pyridoxal phosphate)lysine modification.

It belongs to the class-III pyridoxal-phosphate-dependent aminotransferase family. HemL subfamily. In terms of assembly, homodimer. It depends on pyridoxal 5'-phosphate as a cofactor.

Its subcellular location is the cytoplasm. It catalyses the reaction (S)-4-amino-5-oxopentanoate = 5-aminolevulinate. The protein operates within porphyrin-containing compound metabolism; protoporphyrin-IX biosynthesis; 5-aminolevulinate from L-glutamyl-tRNA(Glu): step 2/2. This is Glutamate-1-semialdehyde 2,1-aminomutase from Escherichia coli (strain SMS-3-5 / SECEC).